The sequence spans 226 residues: UPF0173 metal-dependent hydrolase CHY_0920 (226 aa).

It belongs to the UPF0173 family.

The polypeptide is UPF0173 metal-dependent hydrolase CHY_0920 (Carboxydothermus hydrogenoformans (strain ATCC BAA-161 / DSM 6008 / Z-2901)).